The following is a 127-amino-acid chain: Large ribosomal subunit protein bL17 (127 aa).

The protein belongs to the bacterial ribosomal protein bL17 family. As to quaternary structure, part of the 50S ribosomal subunit. Contacts protein L32.

The sequence is that of Large ribosomal subunit protein bL17 from Actinobacillus pleuropneumoniae serotype 7 (strain AP76).